The primary structure comprises 214 residues: Adenylate kinase (214 aa).

An ATP-binding site is contributed by 10-15; it reads GAGKGT. Residues 30 to 59 form an NMP region; it reads STGDMLRAAIKEGTPLGLEAKKVMDAGQLI. AMP-binding positions include Thr-31, Arg-36, 57–59, 85–88, and Gln-92; these read QLI and GFPR. The interval 122 to 159 is LID; the sequence is GRRVHPGSGRVYHVVYNPPKVADKDNETGEELIIRADD. Residues Arg-123 and 132–133 contribute to the ATP site; that span reads VY. 2 residues coordinate AMP: Arg-156 and Arg-167. Gln-200 is an ATP binding site.

It belongs to the adenylate kinase family. In terms of assembly, monomer.

The protein resides in the cytoplasm. It carries out the reaction AMP + ATP = 2 ADP. It functions in the pathway purine metabolism; AMP biosynthesis via salvage pathway; AMP from ADP: step 1/1. Catalyzes the reversible transfer of the terminal phosphate group between ATP and AMP. Plays an important role in cellular energy homeostasis and in adenine nucleotide metabolism. This chain is Adenylate kinase, found in Pseudoalteromonas translucida (strain TAC 125).